A 110-amino-acid polypeptide reads, in one-letter code: Large ribosomal subunit protein uL22 (110 aa).

The protein belongs to the universal ribosomal protein uL22 family. As to quaternary structure, part of the 50S ribosomal subunit.

Functionally, this protein binds specifically to 23S rRNA; its binding is stimulated by other ribosomal proteins, e.g. L4, L17, and L20. It is important during the early stages of 50S assembly. It makes multiple contacts with different domains of the 23S rRNA in the assembled 50S subunit and ribosome. Its function is as follows. The globular domain of the protein is located near the polypeptide exit tunnel on the outside of the subunit, while an extended beta-hairpin is found that lines the wall of the exit tunnel in the center of the 70S ribosome. The polypeptide is Large ribosomal subunit protein uL22 (Maridesulfovibrio salexigens (strain ATCC 14822 / DSM 2638 / NCIMB 8403 / VKM B-1763) (Desulfovibrio salexigens)).